The sequence spans 283 residues: Phosphatidylglycerol--prolipoprotein diacylglyceryl transferase (283 aa).

7 helical membrane-spanning segments follow: residues 21–41, 60–80, 95–115, 124–144, 176–196, 203–223, and 239–259; these read LAIRWYGLMYLFGFMFALWLA, LLFAGFLGVVIGGRIGYVLFY, VWTGGMSFHGGLLGVISAMLW, FFTIADFVAPLVPFGLGAGRL, SQLYEFALEGIVLFLILNWFI, GAVSGLFLFGYGTFRFLVEYV, and MGQILSLPMVIGGLLMMVWAF. Arg143 contributes to the a 1,2-diacyl-sn-glycero-3-phospho-(1'-sn-glycerol) binding site.

The protein belongs to the Lgt family.

It is found in the cell inner membrane. It catalyses the reaction L-cysteinyl-[prolipoprotein] + a 1,2-diacyl-sn-glycero-3-phospho-(1'-sn-glycerol) = an S-1,2-diacyl-sn-glyceryl-L-cysteinyl-[prolipoprotein] + sn-glycerol 1-phosphate + H(+). It participates in protein modification; lipoprotein biosynthesis (diacylglyceryl transfer). Its function is as follows. Catalyzes the transfer of the diacylglyceryl group from phosphatidylglycerol to the sulfhydryl group of the N-terminal cysteine of a prolipoprotein, the first step in the formation of mature lipoproteins. This Aliivibrio salmonicida (strain LFI1238) (Vibrio salmonicida (strain LFI1238)) protein is Phosphatidylglycerol--prolipoprotein diacylglyceryl transferase.